We begin with the raw amino-acid sequence, 210 residues long: Ribulose-phosphate 3-epimerase (210 aa).

Ser9 serves as a coordination point for substrate. 3 residues coordinate a divalent metal cation: His34, Asp36, and His68. The Proton acceptor role is filled by Asp36. Substrate contacts are provided by residues His68, 144–147 (GFGG), 177–179 (DGG), and 199–200 (GS). Asp177 contributes to the a divalent metal cation binding site. Asp177 (proton donor) is an active-site residue.

This sequence belongs to the ribulose-phosphate 3-epimerase family. A divalent metal cation serves as cofactor.

It carries out the reaction D-ribulose 5-phosphate = D-xylulose 5-phosphate. The protein operates within carbohydrate degradation. Catalyzes the reversible epimerization of D-ribulose 5-phosphate to D-xylulose 5-phosphate. The sequence is that of Ribulose-phosphate 3-epimerase from Serratia marcescens.